The primary structure comprises 805 residues: Nitrite reductase [NAD(P)H] (805 aa).

FAD is bound at residue 43-79 (YNRILLSKVLQGDTDIKDITLNDWDWYEENNIQLYTN). Residue 193–223 (LQNELEKQGMTFLLEKQTEEIVGDDRVEGLR) participates in NADP(+) binding. 4 residues coordinate [2Fe-2S] cluster: cysteine 418, cysteine 420, cysteine 453, and cysteine 456. Residues cysteine 635, cysteine 641, cysteine 675, and cysteine 679 each coordinate [4Fe-4S] cluster. Siroheme is bound at residue cysteine 679.

This sequence belongs to the nitrite and sulfite reductase 4Fe-4S domain family. In terms of assembly, homodimer. Requires siroheme as cofactor. [2Fe-2S] cluster serves as cofactor. [4Fe-4S] cluster is required as a cofactor. The cofactor is FAD.

It carries out the reaction NH4(+) + 3 NADP(+) + 2 H2O = nitrite + 3 NADPH + 5 H(+). The catalysed reaction is NH4(+) + 3 NAD(+) + 2 H2O = nitrite + 3 NADH + 5 H(+). The protein operates within nitrogen metabolism; nitrate reduction (assimilation). Its function is as follows. Required for nitrite assimilation. This Bacillus subtilis (strain 168) protein is Nitrite reductase [NAD(P)H] (nasD).